The following is a 430-amino-acid chain: Multisubstrate adapter protein soc-1 (430 aa).

Residues 7 to 133 enclose the PH domain; that stretch reads NIILEGSLKR…WVNEICKLCK (127 aa). Residues 192-222 are compositionally biased toward low complexity; sequence SHNSLPSNPNYNNLPDPLESSRSETSSMYSS. Disordered stretches follow at residues 192 to 246, 275 to 303, and 315 to 377; these read SHNS…TRHT, EDAE…SEGF, and RRAP…RNLD. Over residues 341–369 the composition is skewed to polar residues; it reads RNLSRNGVNENGNYSATFSSRTSNYQQSE.

In terms of assembly, interacts (via C-terminus) with sem-5 (probably via SH3 domain 2). Interacts with nicotinic acetylcholine receptor. May be phosphorylated.

In terms of biological role, adapter protein which modulates signaling mediated by several receptor tyrosine kinases. Plays a role in fluid homeostasis, probably downstream of receptor egl-15 and upstream of let-60/Ras. Involved in nicotinic acetylcholine receptor (nAChR)-mediated sensitivity to nicotine and levamisole and gamma-aminobutyric acid (GABA)receptor-mediated sensitivity to muscimol. Regulates synaptic levels of nAchR receptor subunit lev-1 and unc-38, and GABA receptor subunit unc-49 in the nerve cord, probably downstream of egl-15. Regulates motility. During the formation of neuromuscular junctions at the larval stage, down-regulates membrane protrusion from body wall muscles, probably downstream of egl-15. Promotes vulva induction and down-regulates fertility, probably downstream of receptor let-23. Down-regulates daf-2-mediated repression of dauer formation and positively regulates daf-2-mediated aging. May be involved in the recruitment of phosphatase ptp-2 to egl-15. This chain is Multisubstrate adapter protein soc-1, found in Caenorhabditis elegans.